Reading from the N-terminus, the 476-residue chain is Major facilitator superfamily domain-containing protein 12 (476 aa).

M1 is subject to N-acetylmethionine. Residues 1–25 (MSPPSDDAGPGPPRTLSLAARLSFA) lie on the Cytoplasmic side of the membrane. A helical transmembrane segment spans residues 26–46 (VGHFLNDLCAGMWFTYLLLFL). Over 47-55 (HSVRGYSSR) the chain is Lumenal. The helical transmembrane segment at 56-76 (GAGLLLLLGQVADGLCTPLVG) threads the bilayer. Residues 77–94 (YEADRASCVRCGPRKAWH) are Cytoplasmic-facing. A helical transmembrane segment spans residues 95 to 115 (LAGTVCVLLSFPFIFSPCLGC). At 116–121 (GEATPE) the chain is on the lumenal side. The helical transmembrane segment at 122–142 (WAALLYYGPFIVVFQFGWAAT) threads the bilayer. At 143–167 (QIAHLSLIPELVTSDHEKVELTALR) the chain is on the cytoplasmic side. Residues 168–188 (YAFTVVANITVYGAAWLLLHL) traverse the membrane as a helical segment. The Lumenal portion of the chain corresponds to 189–213 (QGSAHGEQDISVGDQLGVQDVPVFR). The chain crosses the membrane as a helical span at residues 214–234 (NLALLVVGVGAIFSLLFHLGT). At 235–284 (KEGHRSQHWGNEPNEHTPLVAPAAQPLLLWKHWLREPAFYQVGMLYMTTR) the chain is on the cytoplasmic side. Phosphothreonine is present on T251. The helical transmembrane segment at 285–305 (LIVNLSQTYIAMYLTYSLSLP) threads the bilayer. A topological domain (lumenal) is located at residue K306. A helical transmembrane segment spans residues 307–327 (KFIATIPLVMYLSGFFSSFLM). Residues 328 to 343 (KPVNRRIGRNMTYFTG) lie on the Cytoplasmic side of the membrane. Helical transmembrane passes span 344-364 (LLVILAFAAWVALADNLGVAV) and 365-385 (YGAAVLLGAGCATILVTSLAM). Over 386–398 (TADLIGPHTHSGA) the chain is Cytoplasmic. The helical transmembrane segment at 399–419 (FVYGAMSFSDKVANGLAVMAV) threads the bilayer. The Lumenal segment spans residues 420-444 (QSLHPCPSELCCGACISFYHWVMTA). A helical transmembrane segment spans residues 445–465 (VTGGVGVAAALALCSLLIWPI). The Cytoplasmic segment spans residues 466 to 476 (RIRNRDPRDRP).

The protein belongs to the major facilitator superfamily. Post-translationally, phosphorylation at Thr-251 by MTOR via mTORC1 pathway promotes cysteine transport in lysosomes, thereby regulating lysosomal cysteine and cystine storage and redox homeostasis.

It is found in the melanosome membrane. The protein localises to the lysosome membrane. It carries out the reaction L-cysteine(in) = L-cysteine(out). Its function is as follows. Transporter that mediates the import of cysteine into melanosomes, thereby regulating skin/hair pigmentation. In melanosomes, cysteine import is required both for normal levels of cystine, the oxidized dimer of cysteine, and provide cysteine for the production of the cysteinyldopas used in pheomelanin synthesis, thereby regulating skin/hair pigmentation. Also catalyzes import of cysteine into lysosomes in non-pigmented cells, regulating lysosomal cystine and cysteine storage, which is essnetial for redox homeostasis. The sequence is that of Major facilitator superfamily domain-containing protein 12 from Mus musculus (Mouse).